The primary structure comprises 34 residues: Potassium channel toxin alpha-KTx 6.13 (34 aa).

Intrachain disulfides connect Cys3-Cys24, Cys9-Cys29, Cys13-Cys31, and Cys19-Cys34. Residue Cys34 is modified to Cysteine amide.

The protein belongs to the short scorpion toxin superfamily. Potassium channel inhibitor family. Alpha-KTx 06 subfamily. In terms of tissue distribution, expressed by the venom gland.

Its subcellular location is the secreted. Antagonist of Kv1/KCNA potassium channels. Shows a weak interaction with muscle-type nicotinic acetylcholine receptors (nAChR), since it inhibits alpha-bungarotoxin binding to both muscle-type nAChR from T.californica (IC(50)=490 nM). This suggests it probably weakly inhibits nAChR. This Heterometrus spinifer (Asia giant forest scorpion) protein is Potassium channel toxin alpha-KTx 6.13.